The following is a 401-amino-acid chain: Calreticulin (401 aa).

Residues 1–18 form the signal peptide; sequence MRKELWLGLLLSSQAVLS. C103 and C134 are joined by a disulfide. Y107, K109, Y125, and D132 together coordinate an alpha-D-glucoside. 7 repeat units span residues 187–198, 206–217, 223–234, 241–252, 256–266, 270–280, and 284–294. A 4 X approximate repeats region spans residues 187 to 252; that stretch reads KESGTLEEDW…DATQPDDWDE (66 aa). Composition is skewed to basic and acidic residues over residues 199–214 and 224–236; these read LKPK…KPAD and PEDK…DKEP. The interval 199-263 is disordered; it reads LKPKTIPDPE…EDGKWEAPMI (65 aa). Acidic residues predominate over residues 246–256; that stretch reads QPDDWDEEEDG. Residues 256 to 294 form a 3 X approximate repeats region; sequence GKWEAPMISNPKYKGEWKAKKIPNPAYKGVWKPRDIPNP. D314 serves as a coordination point for an alpha-D-glucoside. The disordered stretch occupies residues 341-401; sequence DQTNGATKDA…EEEDDKKDEL (61 aa). A compositionally biased stretch (basic and acidic residues) spans 348–381; that stretch reads KDAEKKAFDSAEADKRKKEEDERKKQEEEEKKTA. Residues 382-401 show a composition bias toward acidic residues; sequence EEDEDDDDEEEEEDDKKDEL. The Prevents secretion from ER signature appears at 398–401; the sequence is KDEL.

The protein belongs to the calreticulin family.

It localises to the endoplasmic reticulum lumen. Its function is as follows. Molecular calcium-binding chaperone promoting folding, oligomeric assembly and quality control in the ER via the calreticulin/calnexin cycle. This lectin may interact transiently with almost all of the monoglucosylated glycoproteins that are synthesized in the ER. The sequence is that of Calreticulin from Euglena gracilis.